The primary structure comprises 439 residues: Histidinol dehydrogenase (439 aa).

Residues tyrosine 125, glutamine 187, and asparagine 210 each coordinate NAD(+). 3 residues coordinate substrate: threonine 233, glutamine 255, and histidine 258. Residues glutamine 255 and histidine 258 each contribute to the Zn(2+) site. Active-site proton acceptor residues include glutamate 323 and histidine 324. The substrate site is built by histidine 324, aspartate 357, glutamate 411, and histidine 416. Aspartate 357 is a binding site for Zn(2+). Histidine 416 is a Zn(2+) binding site.

This sequence belongs to the histidinol dehydrogenase family. It depends on Zn(2+) as a cofactor.

It catalyses the reaction L-histidinol + 2 NAD(+) + H2O = L-histidine + 2 NADH + 3 H(+). It participates in amino-acid biosynthesis; L-histidine biosynthesis; L-histidine from 5-phospho-alpha-D-ribose 1-diphosphate: step 9/9. In terms of biological role, catalyzes the sequential NAD-dependent oxidations of L-histidinol to L-histidinaldehyde and then to L-histidine. This is Histidinol dehydrogenase from Symbiobacterium thermophilum (strain DSM 24528 / JCM 14929 / IAM 14863 / T).